We begin with the raw amino-acid sequence, 226 residues long: Glycerol-3-phosphate acyltransferase (226 aa).

Transmembrane regions (helical) follow at residues 1–21, 60–80, 102–122, 134–154, 159–178, and 182–197; these read MGFW…LGSF, FVLG…YYLF, LVTL…FLGF, ILLA…AVVV, IVSL…MVFL, and LPYI…YVIL.

The protein belongs to the PlsY family. In terms of assembly, probably interacts with PlsX.

The protein resides in the cell inner membrane. It carries out the reaction an acyl phosphate + sn-glycerol 3-phosphate = a 1-acyl-sn-glycero-3-phosphate + phosphate. It functions in the pathway lipid metabolism; phospholipid metabolism. Catalyzes the transfer of an acyl group from acyl-phosphate (acyl-PO(4)) to glycerol-3-phosphate (G3P) to form lysophosphatidic acid (LPA). This enzyme utilizes acyl-phosphate as fatty acyl donor, but not acyl-CoA or acyl-ACP. This Nostoc sp. (strain PCC 7120 / SAG 25.82 / UTEX 2576) protein is Glycerol-3-phosphate acyltransferase.